The sequence spans 157 residues: NADPH-dependent 7-cyano-7-deazaguanine reductase (157 aa).

Residue Cys55 is the Thioimide intermediate of the active site. Catalysis depends on Asp62, which acts as the Proton donor. Substrate is bound by residues 77–79 and 96–97; these read VES and HE.

This sequence belongs to the GTP cyclohydrolase I family. QueF type 1 subfamily.

It is found in the cytoplasm. It carries out the reaction 7-aminomethyl-7-carbaguanine + 2 NADP(+) = 7-cyano-7-deazaguanine + 2 NADPH + 3 H(+). It functions in the pathway tRNA modification; tRNA-queuosine biosynthesis. Its function is as follows. Catalyzes the NADPH-dependent reduction of 7-cyano-7-deazaguanine (preQ0) to 7-aminomethyl-7-deazaguanine (preQ1). The chain is NADPH-dependent 7-cyano-7-deazaguanine reductase from Neisseria meningitidis serogroup C / serotype 2a (strain ATCC 700532 / DSM 15464 / FAM18).